The sequence spans 190 residues: Threonylcarbamoyl-AMP synthase (190 aa).

Residues 7-190 (NFVLADIVRA…ALTGKRFRQG (184 aa)) form the YrdC-like domain.

It belongs to the SUA5 family. TsaC subfamily.

The protein localises to the cytoplasm. It carries out the reaction L-threonine + hydrogencarbonate + ATP = L-threonylcarbamoyladenylate + diphosphate + H2O. In terms of biological role, required for the formation of a threonylcarbamoyl group on adenosine at position 37 (t(6)A37) in tRNAs that read codons beginning with adenine. Catalyzes the conversion of L-threonine, HCO(3)(-)/CO(2) and ATP to give threonylcarbamoyl-AMP (TC-AMP) as the acyladenylate intermediate, with the release of diphosphate. The polypeptide is Threonylcarbamoyl-AMP synthase (Yersinia pestis bv. Antiqua (strain Angola)).